We begin with the raw amino-acid sequence, 186 residues long: Glutathione peroxidase 7 (186 aa).

A signal peptide spans 1–18 (MVAAVATAWLLLWAAACA). The active site involves cysteine 56.

Belongs to the glutathione peroxidase family.

Its subcellular location is the secreted. It catalyses the reaction 2 glutathione + H2O2 = glutathione disulfide + 2 H2O. Its function is as follows. It protects esophageal epithelia from hydrogen peroxide-induced oxidative stress. It suppresses acidic bile acid-induced reactive oxygen species (ROS) and protects against oxidative DNA damage and double-strand breaks. In Mus musculus (Mouse), this protein is Glutathione peroxidase 7 (Gpx7).